We begin with the raw amino-acid sequence, 91 residues long: Metalloproteinase inhibitor 2 (91 aa).

Residues 1-91 (KAVSEKEVDS…FIVPWDTLST (91 aa)) form the NTR domain.

It belongs to the protease inhibitor I35 (TIMP) family. The activity of TIMP2 is dependent on the presence of disulfide bonds.

The protein localises to the secreted. Complexes with metalloproteinases (such as collagenases) and irreversibly inactivates them. This chain is Metalloproteinase inhibitor 2 (TIMP2), found in Equus caballus (Horse).